The chain runs to 184 residues: Ribosome maturation factor RimM (184 aa).

Residues 93–165 form the PRC barrel domain; it reads DEGWYEHELV…YILITPPSGL (73 aa).

Belongs to the RimM family. In terms of assembly, binds ribosomal protein uS19.

It is found in the cytoplasm. Functionally, an accessory protein needed during the final step in the assembly of 30S ribosomal subunit, possibly for assembly of the head region. Essential for efficient processing of 16S rRNA. May be needed both before and after RbfA during the maturation of 16S rRNA. It has affinity for free ribosomal 30S subunits but not for 70S ribosomes. The sequence is that of Ribosome maturation factor RimM from Paenarthrobacter aurescens (strain TC1).